The following is a 277-amino-acid chain: Phosphatidylglycerol--prolipoprotein diacylglyceryl transferase (277 aa).

Helical transmembrane passes span 11–31, 55–75, 93–113, and 117–137; these read IIFS…LISF, LLYI…IIFY, GGMS…YLSL, and VKIL…LGAG. Arg138 is an a 1,2-diacyl-sn-glycero-3-phospho-(1'-sn-glycerol) binding site. Helical transmembrane passes span 192 to 212, 220 to 240, and 256 to 276; these read PSQL…IYFF, GSIS…SEFF, and MGQI…NLFI.

The protein belongs to the Lgt family.

The protein localises to the cell inner membrane. It catalyses the reaction L-cysteinyl-[prolipoprotein] + a 1,2-diacyl-sn-glycero-3-phospho-(1'-sn-glycerol) = an S-1,2-diacyl-sn-glyceryl-L-cysteinyl-[prolipoprotein] + sn-glycerol 1-phosphate + H(+). Its pathway is protein modification; lipoprotein biosynthesis (diacylglyceryl transfer). Its function is as follows. Catalyzes the transfer of the diacylglyceryl group from phosphatidylglycerol to the sulfhydryl group of the N-terminal cysteine of a prolipoprotein, the first step in the formation of mature lipoproteins. The sequence is that of Phosphatidylglycerol--prolipoprotein diacylglyceryl transferase from Buchnera aphidicola subsp. Schizaphis graminum (strain Sg).